A 183-amino-acid polypeptide reads, in one-letter code: Ras-related protein Rap-2a (183 aa).

10 to 17 contributes to the GTP binding site; sequence GSGGVGKS. An Effector region motif is present at residues 32–40; that stretch reads YDPTIEDFY. Residues 57 to 61 and 116 to 119 each bind GTP; these read DTAGT and NKVD. Residues Cys-176 and Cys-177 are each lipidated (S-palmitoyl cysteine). A Cysteine methyl ester modification is found at Cys-180. A lipid anchor (S-farnesyl cysteine) is attached at Cys-180. The propeptide at 181-183 is removed in mature form; it reads VIL.

The protein belongs to the small GTPase superfamily. Ras family. Interacts (GTP-bound form) with RUNDC3A. Interacts with PLCE1. Interacts with ARHGAP29, SGSM1, SGSM2 and SGSM3. Interacts (GTP-bound form preferentially) with TNIK (via the CNH domain); the interaction is direct and recruits RAP2A to the E3 ubiquitin ligase NEDD4. Interacts with MINK1. Interacts (GTP-bound form preferentially) with MAP4K4. Interacts with cytoskeletal actin. Interacts with RGS14; the interaction is GTP-dependent. In terms of processing, ubiquitinated; undergoes 'Lys-63' monoubiquitination and diubiquitination by NEDD4. Multiple lysine residues are probably modified. Ubiquitination requires TNIK, prevents interaction with effectors and inactivates RAP2A. Ubiquitination by the ECS(RAB40B) complex leads to RAP2A localization to lamellipodia plasma membrane, activation, and regulation of sorting at early endosomes for recycling to the lamellipodia plasma membrane. Palmitoylated. Palmitoylation is required for association with recycling endosome membranes and activation of TNIK.

The protein localises to the midbody. Its subcellular location is the cell projection. It localises to the lamellipodium membrane. The protein resides in the golgi apparatus. It is found in the recycling endosome membrane. The protein localises to the lysosome. It catalyses the reaction GTP + H2O = GDP + phosphate + H(+). With respect to regulation, activated by the guanine nucleotide-exchange factors RAPGEF3 and RAPGEF4 in a cAMP-dependent manner. Nucleotide exchange is also specifically stimulated by RAPGEF5, RASGEF1A and RASGEF1B. In terms of biological role, small GTP-binding protein which cycles between a GDP-bound inactive and a GTP-bound active form. In its active form interacts with and regulates several effectors including MAP4K4, MINK1 and TNIK. Part of a signaling complex composed of NEDD4, RAP2A and TNIK which regulates neuronal dendrite extension and arborization during development. More generally, it is part of several signaling cascades and may regulate cytoskeletal rearrangements, cell migration, cell adhesion and cell spreading. The protein is Ras-related protein Rap-2a (RAP2A) of Sus scrofa (Pig).